We begin with the raw amino-acid sequence, 579 residues long: Proline--tRNA ligase (579 aa).

Belongs to the class-II aminoacyl-tRNA synthetase family. ProS type 1 subfamily. Homodimer.

Its subcellular location is the cytoplasm. The enzyme catalyses tRNA(Pro) + L-proline + ATP = L-prolyl-tRNA(Pro) + AMP + diphosphate. Catalyzes the attachment of proline to tRNA(Pro) in a two-step reaction: proline is first activated by ATP to form Pro-AMP and then transferred to the acceptor end of tRNA(Pro). As ProRS can inadvertently accommodate and process non-cognate amino acids such as alanine and cysteine, to avoid such errors it has two additional distinct editing activities against alanine. One activity is designated as 'pretransfer' editing and involves the tRNA(Pro)-independent hydrolysis of activated Ala-AMP. The other activity is designated 'posttransfer' editing and involves deacylation of mischarged Ala-tRNA(Pro). The misacylated Cys-tRNA(Pro) is not edited by ProRS. The chain is Proline--tRNA ligase from Hamiltonella defensa subsp. Acyrthosiphon pisum (strain 5AT).